The primary structure comprises 178 residues: Adenine phosphoribosyltransferase (178 aa).

Belongs to the purine/pyrimidine phosphoribosyltransferase family. Homodimer.

It is found in the cytoplasm. It carries out the reaction AMP + diphosphate = 5-phospho-alpha-D-ribose 1-diphosphate + adenine. The protein operates within purine metabolism; AMP biosynthesis via salvage pathway; AMP from adenine: step 1/1. Catalyzes a salvage reaction resulting in the formation of AMP, that is energically less costly than de novo synthesis. The protein is Adenine phosphoribosyltransferase of Bacteroides fragilis (strain ATCC 25285 / DSM 2151 / CCUG 4856 / JCM 11019 / LMG 10263 / NCTC 9343 / Onslow / VPI 2553 / EN-2).